The sequence spans 171 residues: MNYFELFGLPIQFELDGSLLSSQFRALQKRFHPDNFATASERDRLMAVQQAAQINDAYQTLKDSLRRAEYLLSLQGIEMKAEQQTLQDPMFLMEQMELREELESVTACADPEAALVAFDTKVTAMQRHYLAQLQGQLAQSEWLAAADQIRKLKFIAKLKNEVERVEDQLLG.

The J domain maps to 2 to 74 (NYFELFGLPI…LRRAEYLLSL (73 aa)).

It belongs to the HscB family. Interacts with HscA and stimulates its ATPase activity.

Its function is as follows. Co-chaperone involved in the maturation of iron-sulfur cluster-containing proteins. Seems to help targeting proteins to be folded toward HscA. This Vibrio cholerae serotype O1 (strain M66-2) protein is Co-chaperone protein HscB homolog.